An 837-amino-acid chain; its full sequence is Protein translocase subunit SecA 1 (837 aa).

Residues Gln85, 103–107 (GEGKT), and Asp493 contribute to the ATP site. The Zn(2+) site is built by Cys821, Cys823, Cys832, and His833.

The protein belongs to the SecA family. In terms of assembly, monomer and homodimer. Part of the essential Sec protein translocation apparatus which comprises SecA, SecYEG and auxiliary proteins SecDF. Other proteins may also be involved. The cofactor is Zn(2+).

The protein resides in the cell membrane. It is found in the cytoplasm. The enzyme catalyses ATP + H2O + cellular proteinSide 1 = ADP + phosphate + cellular proteinSide 2.. In terms of biological role, part of the Sec protein translocase complex. Interacts with the SecYEG preprotein conducting channel. Has a central role in coupling the hydrolysis of ATP to the transfer of proteins into and across the cell membrane, serving as an ATP-driven molecular motor driving the stepwise translocation of polypeptide chains across the membrane. This chain is Protein translocase subunit SecA 1, found in Streptococcus pneumoniae serotype 4 (strain ATCC BAA-334 / TIGR4).